Consider the following 287-residue polypeptide: Pyridoxal kinase PdxY (287 aa).

Residues S9 and 44–45 each bind substrate; that span reads TQ. ATP contacts are provided by residues D111, A143, E148, K181, and 208–211; that span reads RPLV. D223 contributes to the substrate binding site.

The protein belongs to the pyridoxine kinase family. PdxY subfamily. Homodimer. Requires Mg(2+) as cofactor.

The enzyme catalyses pyridoxal + ATP = pyridoxal 5'-phosphate + ADP + H(+). Its pathway is cofactor metabolism; pyridoxal 5'-phosphate salvage; pyridoxal 5'-phosphate from pyridoxal: step 1/1. Pyridoxal kinase involved in the salvage pathway of pyridoxal 5'-phosphate (PLP). Catalyzes the phosphorylation of pyridoxal to PLP. The protein is Pyridoxal kinase PdxY of Photorhabdus laumondii subsp. laumondii (strain DSM 15139 / CIP 105565 / TT01) (Photorhabdus luminescens subsp. laumondii).